The primary structure comprises 880 residues: DNA mismatch repair protein MutS (880 aa).

631–638 contacts ATP; that stretch reads GPNMAGKS. The disordered stretch occupies residues 835 to 860; it reads RAAPPPPAPAAPKTSPVEERLREIQP. The segment covering 850-860 has biased composition (basic and acidic residues); the sequence is PVEERLREIQP.

The protein belongs to the DNA mismatch repair MutS family.

Functionally, this protein is involved in the repair of mismatches in DNA. It is possible that it carries out the mismatch recognition step. This protein has a weak ATPase activity. In Cereibacter sphaeroides (strain ATCC 17029 / ATH 2.4.9) (Rhodobacter sphaeroides), this protein is DNA mismatch repair protein MutS.